We begin with the raw amino-acid sequence, 175 residues long: NADH-ubiquinone oxidoreductase chain 6 (175 aa).

Transmembrane regions (helical) follow at residues 1-21 (MMYT…GVSS), 24-44 (SPVY…GIVV), 46-66 (FGGS…MMVV), 86-106 (IVVL…VVYL), and 149-169 (YGCW…FIVI).

This sequence belongs to the complex I subunit 6 family. In terms of assembly, core subunit of respiratory chain NADH dehydrogenase (Complex I) which is composed of 45 different subunits.

It localises to the mitochondrion inner membrane. It carries out the reaction a ubiquinone + NADH + 5 H(+)(in) = a ubiquinol + NAD(+) + 4 H(+)(out). In terms of biological role, core subunit of the mitochondrial membrane respiratory chain NADH dehydrogenase (Complex I) which catalyzes electron transfer from NADH through the respiratory chain, using ubiquinone as an electron acceptor. Essential for the catalytic activity and assembly of complex I. The protein is NADH-ubiquinone oxidoreductase chain 6 (MT-ND6) of Dugong dugon (Dugong).